The primary structure comprises 482 residues: Exodeoxyribonuclease I (482 aa).

Positions 13–194 (LFYDYETFGI…TSDVYATIEL (182 aa)) constitute an Exonuclease domain. The Mg(2+) site is built by Asp-16, Glu-18, and Asp-187. Residue Glu-18 coordinates substrate. The ExoI SH3-like domain maps to 203–351 (PKLFDFFFKY…LVKNVLLKKN (149 aa)). The 117-residue stretch at 355–471 (NSLNVDLQIY…DLLKYVFKKY (117 aa)) folds into the ExoI C-terminal domain.

As to quaternary structure, monomer. Interacts with ssb (via C-terminus); this interaction stimulates the exonuclease activity by recruiting the enzyme to its substrate. Requires Mg(2+) as cofactor.

It carries out the reaction Exonucleolytic cleavage in the 3'- to 5'-direction to yield nucleoside 5'-phosphates.. Its function is as follows. Degrades single-stranded DNA (ssDNA) in a highly processive manner. Also functions as a DNA deoxyribophosphodiesterase that releases deoxyribose-phosphate moieties following the cleavage of DNA at an apurinic/apyrimidinic (AP) site by either an AP endonuclease or AP lyase. The sequence is that of Exodeoxyribonuclease I (sbcB) from Buchnera aphidicola subsp. Schizaphis graminum (strain Sg).